We begin with the raw amino-acid sequence, 475 residues long: MSSLLKTDFNVSKYRLIAQKREANAVEIEAALEVVREFIIKKKLILYGGIAIDYALHLKGSSIYPEGERPDFDMFSPNHVEDAYELADILYEKGFKQVGTVRAIHVQTMRVRTDFVWVADLSYMPPNIFDTIPTLTYKNLKIIHPDYQRAGLHLAFCFPFDNPPREDVFSRFKKDLQRYNLIEKYYPIPVVPVKSTYESKTFSIPFKQVAIHGFAAYALLYQTLNELRITCKVPEWKTEFPQPSYSYHKNDKNITLTVDMPRAYPALVLATYNPEGVIKEMGLHLTEICEPYMDYSPPIFKTNDIHFFSTMFKELAISIIQDNLIVVSPQYLLLYFLYGAFATPADKSLFLFYYNATLWILEKADSLLNIIQKQTSPEEFTRFANTSPFVLTTRVLSCSQERCTFSPAYRISLANDVQQSQLPLPKTHFLSNSLPDISTLPYNYYPGKGKEKPTNFNYEKNLLFNIGGKCTPSAM.

It belongs to the poxviridae poly(A) polymerase catalytic subunit family. Highly divergent.

It localises to the virion. It catalyses the reaction RNA(n) + ATP = RNA(n)-3'-adenine ribonucleotide + diphosphate. Its function is as follows. Polymerase that creates the 3'-poly(A) tail of mRNA's. The polypeptide is Putative poly(A) polymerase catalytic subunit (African swine fever virus (isolate Tick/South Africa/Pretoriuskop Pr4/1996) (ASFV)).